The chain runs to 405 residues: Threonine synthase (405 aa).

The residue at position 104 (Lys-104) is an N6-(pyridoxal phosphate)lysine. Pyridoxal 5'-phosphate is bound by residues Asn-130, 231-235 (GNAGN), and Thr-369.

It belongs to the threonine synthase family. In terms of assembly, homotrimer. Pyridoxal 5'-phosphate serves as cofactor.

The enzyme catalyses O-phospho-L-homoserine + H2O = L-threonine + phosphate. It participates in amino-acid biosynthesis; L-threonine biosynthesis; L-threonine from L-aspartate: step 5/5. In terms of biological role, catalyzes the gamma-elimination of phosphate from L-phosphohomoserine and the beta-addition of water to produce L-threonine. Does not catalyze the conversion of O-acetyl-L-homoserine into threonine. This is Threonine synthase (thrC) from Methanosarcina acetivorans (strain ATCC 35395 / DSM 2834 / JCM 12185 / C2A).